The chain runs to 526 residues: NAD(P)H-quinone oxidoreductase subunit 2 (526 aa).

14 helical membrane passes run 16–36, 43–63, 80–100, 107–127, 133–153, 168–188, 211–231, 245–265, 279–299, 307–327, 335–355, 379–399, 401–421, and 469–489; these read ILPE…DLIV, WIPY…YLGW, LSIL…MMSV, GTAL…GMFL, LVMI…LTGY, LLIG…LYGL, LALA…ISAV, PTPV…ALAI, WHFI…VVAL, MLAY…VAGT, IFYL…VILF, LGLS…GFFG, IYLF…LGLI, and LVLS…LFVI.

The protein belongs to the complex I subunit 2 family. In terms of assembly, NDH-1 can be composed of about 15 different subunits; different subcomplexes with different compositions have been identified which probably have different functions.

It localises to the cellular thylakoid membrane. The catalysed reaction is a plastoquinone + NADH + (n+1) H(+)(in) = a plastoquinol + NAD(+) + n H(+)(out). The enzyme catalyses a plastoquinone + NADPH + (n+1) H(+)(in) = a plastoquinol + NADP(+) + n H(+)(out). Its function is as follows. NDH-1 shuttles electrons from an unknown electron donor, via FMN and iron-sulfur (Fe-S) centers, to quinones in the respiratory and/or the photosynthetic chain. The immediate electron acceptor for the enzyme in this species is believed to be plastoquinone. Couples the redox reaction to proton translocation, and thus conserves the redox energy in a proton gradient. Cyanobacterial NDH-1 also plays a role in inorganic carbon-concentration. This Picosynechococcus sp. (strain ATCC 27264 / PCC 7002 / PR-6) (Agmenellum quadruplicatum) protein is NAD(P)H-quinone oxidoreductase subunit 2.